A 370-amino-acid polypeptide reads, in one-letter code: UDP-N-acetylglucosamine--N-acetylmuramyl-(pentapeptide) pyrophosphoryl-undecaprenol N-acetylglucosamine transferase (370 aa).

Residues 10–12 (TGG), Asn-126, Ser-200, Ile-255, and Gln-300 contribute to the UDP-N-acetyl-alpha-D-glucosamine site.

Belongs to the glycosyltransferase 28 family. MurG subfamily.

It localises to the cell membrane. The catalysed reaction is Mur2Ac(oyl-L-Ala-gamma-D-Glu-L-Lys-D-Ala-D-Ala)-di-trans,octa-cis-undecaprenyl diphosphate + UDP-N-acetyl-alpha-D-glucosamine = beta-D-GlcNAc-(1-&gt;4)-Mur2Ac(oyl-L-Ala-gamma-D-Glu-L-Lys-D-Ala-D-Ala)-di-trans,octa-cis-undecaprenyl diphosphate + UDP + H(+). Its pathway is cell wall biogenesis; peptidoglycan biosynthesis. Cell wall formation. Catalyzes the transfer of a GlcNAc subunit on undecaprenyl-pyrophosphoryl-MurNAc-pentapeptide (lipid intermediate I) to form undecaprenyl-pyrophosphoryl-MurNAc-(pentapeptide)GlcNAc (lipid intermediate II). The chain is UDP-N-acetylglucosamine--N-acetylmuramyl-(pentapeptide) pyrophosphoryl-undecaprenol N-acetylglucosamine transferase from Lactobacillus delbrueckii subsp. bulgaricus (strain ATCC 11842 / DSM 20081 / BCRC 10696 / JCM 1002 / NBRC 13953 / NCIMB 11778 / NCTC 12712 / WDCM 00102 / Lb 14).